The following is a 346-amino-acid chain: Hydroxyproline O-galactosyltransferase HPGT3 (346 aa).

Residues 1-10 (MESLPTTVPS) show a composition bias toward polar residues. The tract at residues 1–21 (MESLPTTVPSKSERRARSSKF) is disordered. The Cytoplasmic portion of the chain corresponds to 1 to 28 (MESLPTTVPSKSERRARSSKFSQSSSKP). A helical; Signal-anchor for type II membrane protein membrane pass occupies residues 29–45 (SVIMAFFSCVAWLYVAG). Topologically, residues 46–346 (RLWQDAENRV…IRQDKVCSVA (301 aa)) are lumenal.

Belongs to the glycosyltransferase 31 family. Mn(2+) serves as cofactor. In terms of tissue distribution, expressed in roots, rosette leaves, cauline leaves, stems, flowers and siliques.

The protein localises to the golgi apparatus membrane. The protein operates within protein modification; protein glycosylation. Its function is as follows. Possesses hydroxyproline O-galactosyltransferase activity. Transfers galactose from UDP-galactose to hydroxyproline residues in the arabinogalactan proteins (AGPs). Is specific for AGPs containing non-contiguous peptidyl hydroxyproline residues. The addition of galactose onto the peptidyl hydroxyproline residues in AGP core proteins represents the first committed step in arabinogalactan polysaccharide addition. AGP glycans play essential roles in both vegetative and reproductive plant growth. The chain is Hydroxyproline O-galactosyltransferase HPGT3 from Arabidopsis thaliana (Mouse-ear cress).